The primary structure comprises 91 residues: Acyl carrier protein (91 aa).

The 76-residue stretch at 4 to 79 (QQILDKVQSI…QAVDYILQHK (76 aa)) folds into the Carrier domain. S39 is modified (O-(pantetheine 4'-phosphoryl)serine).

The protein belongs to the acyl carrier protein (ACP) family. Post-translationally, 4'-phosphopantetheine is transferred from CoA to a specific serine of apo-ACP by AcpS. This modification is essential for activity because fatty acids are bound in thioester linkage to the sulfhydryl of the prosthetic group.

Its subcellular location is the plastid. The protein resides in the chloroplast. Its pathway is lipid metabolism; fatty acid biosynthesis. Carrier of the growing fatty acid chain in fatty acid biosynthesis. The polypeptide is Acyl carrier protein (Cyanidioschyzon merolae (strain NIES-3377 / 10D) (Unicellular red alga)).